The chain runs to 758 residues: ATP-dependent RNA helicase dbp7 (758 aa).

Disordered stretches follow at residues 28–98 and 110–130; these read TWRD…NQPR and EPQK…KPTN. Basic residues predominate over residues 35–45; the sequence is AKKIAKHHAKG. A compositionally biased stretch (polar residues) spans 84 to 98; the sequence is GKQQSHGHPHSNQPR. Basic and acidic residues predominate over residues 110-125; sequence EPQKAEEVKEEGHVEN. Residues 138–167 carry the Q motif motif; it reads DTFTNLGLSPNLAAHLLTKLELKAPTAIQK. In terms of domain architecture, Helicase ATP-binding spans 171-372; the sequence is SQLLKEEGDA…EISLKDAVHI (202 aa). 184-191 serves as a coordination point for ATP; it reads AETGSGKT. The DEAD box motif lies at 308–311; the sequence is DEGD. The 223-residue stretch at 398-620 folds into the Helicase C-terminal domain; it reads QLKQSYAVVA…NVESGNKDWE (223 aa). Basic and acidic residues-rich tracts occupy residues 455–471 and 697–709; these read KEDG…EEKP and GKEE…KAER. Disordered stretches follow at residues 455-483 and 697-745; these read KEDG…APAT and GKEE…RAKM.

This sequence belongs to the DEAD box helicase family. DDX31/DBP7 subfamily.

It is found in the nucleus. The protein resides in the nucleolus. The catalysed reaction is ATP + H2O = ADP + phosphate + H(+). Its function is as follows. ATP-binding RNA helicase involved in the biogenesis of 60S ribosomal subunits and is required for the normal formation of 25S and 5.8S rRNAs. The chain is ATP-dependent RNA helicase dbp7 (dbp7) from Aspergillus fumigatus (strain ATCC MYA-4609 / CBS 101355 / FGSC A1100 / Af293) (Neosartorya fumigata).